Consider the following 235-residue polypeptide: NADH-quinone oxidoreductase subunit B 2 (235 aa).

Positions 1 to 14 (MGLTSRPTPASRQP) are enriched in low complexity. The interval 1–24 (MGLTSRPTPASRQPASPPPADPVL) is disordered. [4Fe-4S] cluster is bound by residues cysteine 63, cysteine 64, cysteine 129, and cysteine 159. The disordered stretch occupies residues 188–235 (TGATGGGPSTDALRSGLVAAPTAPGPTAPASTAPGPTAPAPTQDEERR).

It belongs to the complex I 20 kDa subunit family. As to quaternary structure, NDH-1 is composed of 14 different subunits. Subunits NuoB, C, D, E, F, and G constitute the peripheral sector of the complex. [4Fe-4S] cluster serves as cofactor.

It is found in the cell membrane. It carries out the reaction a quinone + NADH + 5 H(+)(in) = a quinol + NAD(+) + 4 H(+)(out). Its function is as follows. NDH-1 shuttles electrons from NADH, via FMN and iron-sulfur (Fe-S) centers, to quinones in the respiratory chain. The immediate electron acceptor for the enzyme in this species is believed to be a menaquinone. Couples the redox reaction to proton translocation (for every two electrons transferred, four hydrogen ions are translocated across the cytoplasmic membrane), and thus conserves the redox energy in a proton gradient. This chain is NADH-quinone oxidoreductase subunit B 2, found in Streptomyces griseus subsp. griseus (strain JCM 4626 / CBS 651.72 / NBRC 13350 / KCC S-0626 / ISP 5235).